The primary structure comprises 505 residues: DEAD-box ATP-dependent RNA helicase 8 (505 aa).

A disordered region spans residues 1–85 (MNNRGRYPPG…GQIPGGNSNG (85 aa)). Residues 20 to 31 (PNPNYQSRSGYQ) are compositionally biased toward polar residues. The span at 43-71 (NYAQNHQQQFQQAPSQPHQYQQQQQQQQQ) shows a compositional bias: low complexity. Residues 131–159 (NEFEDYFLKRELLMGIYEKGFERPSPIQE) carry the Q motif motif. The Helicase ATP-binding domain occupies 162 to 332 (IPIALTGRDI…DRFLTNPYVI (171 aa)). 175-182 (AKNGTGKT) contacts ATP. At T237 the chain carries Phosphothreonine. A DEAD box motif is present at residues 280-283 (DEAD). Residues 342 to 502 (GITQFYAFVE…QIPPHIDQAI (161 aa)) form the Helicase C-terminal domain.

Belongs to the DEAD box helicase family. DDX6/DHH1 subfamily.

It is found in the cytoplasm. The protein resides in the P-body. The catalysed reaction is ATP + H2O = ADP + phosphate + H(+). ATP-dependent RNA helicase involved in mRNA turnover, and more specifically in mRNA decapping. The sequence is that of DEAD-box ATP-dependent RNA helicase 8 (RH8) from Arabidopsis thaliana (Mouse-ear cress).